Consider the following 259-residue polypeptide: Uridylate kinase (259 aa).

K10–G13 provides a ligand contact to ATP. G52 contacts UMP. Residues G53 and R57 each contribute to the ATP site. Residues D72 and N134–T141 contribute to the UMP site. Residues Y168 and D171 each contribute to the ATP site. The interval I236–A259 is disordered.

This sequence belongs to the UMP kinase family. In terms of assembly, homohexamer.

It is found in the cytoplasm. It catalyses the reaction UMP + ATP = UDP + ADP. Its pathway is pyrimidine metabolism; CTP biosynthesis via de novo pathway; UDP from UMP (UMPK route): step 1/1. Inhibited by UTP. Its function is as follows. Catalyzes the reversible phosphorylation of UMP to UDP. The protein is Uridylate kinase of Frankia casuarinae (strain DSM 45818 / CECT 9043 / HFP020203 / CcI3).